The sequence spans 217 residues: Enolase-phosphatase E1 (217 aa).

Positions 9 and 11 each coordinate Mg(2+). Residues 112 to 113 (SS) and Lys-151 each bind substrate. Asp-176 is a Mg(2+) binding site.

Belongs to the HAD-like hydrolase superfamily. MasA/MtnC family. As to quaternary structure, monomer. Mg(2+) is required as a cofactor.

It is found in the cytoplasm. It localises to the nucleus. It catalyses the reaction 5-methylsulfanyl-2,3-dioxopentyl phosphate + H2O = 1,2-dihydroxy-5-(methylsulfanyl)pent-1-en-3-one + phosphate. The protein operates within amino-acid biosynthesis; L-methionine biosynthesis via salvage pathway; L-methionine from S-methyl-5-thio-alpha-D-ribose 1-phosphate: step 3/6. It functions in the pathway amino-acid biosynthesis; L-methionine biosynthesis via salvage pathway; L-methionine from S-methyl-5-thio-alpha-D-ribose 1-phosphate: step 4/6. Bifunctional enzyme that catalyzes the enolization of 2,3-diketo-5-methylthiopentyl-1-phosphate (DK-MTP-1-P) into the intermediate 2-hydroxy-3-keto-5-methylthiopentenyl-1-phosphate (HK-MTPenyl-1-P), which is then dephosphorylated to form the acireductone 1,2-dihydroxy-3-keto-5-methylthiopentene (DHK-MTPene). In Lachancea thermotolerans (strain ATCC 56472 / CBS 6340 / NRRL Y-8284) (Yeast), this protein is Enolase-phosphatase E1.